A 324-amino-acid polypeptide reads, in one-letter code: Quinolinate synthase (324 aa).

Iminosuccinate is bound by residues His-39 and Ser-56. Cys-101 serves as a coordination point for [4Fe-4S] cluster. Iminosuccinate contacts are provided by residues Tyr-127–Asn-129 and Ser-144. Residue Cys-187 coordinates [4Fe-4S] cluster. Residues His-213–Glu-215 and Thr-230 contribute to the iminosuccinate site. Residue Cys-280 participates in [4Fe-4S] cluster binding.

This sequence belongs to the quinolinate synthase family. Type 2 subfamily. It depends on [4Fe-4S] cluster as a cofactor.

It is found in the cytoplasm. The enzyme catalyses iminosuccinate + dihydroxyacetone phosphate = quinolinate + phosphate + 2 H2O + H(+). The protein operates within cofactor biosynthesis; NAD(+) biosynthesis; quinolinate from iminoaspartate: step 1/1. Its function is as follows. Catalyzes the condensation of iminoaspartate with dihydroxyacetone phosphate to form quinolinate. This is Quinolinate synthase from Trichormus variabilis (strain ATCC 29413 / PCC 7937) (Anabaena variabilis).